The sequence spans 293 residues: Urease accessory protein UreD (293 aa).

Belongs to the UreD family. In terms of assembly, ureD, UreF and UreG form a complex that acts as a GTP-hydrolysis-dependent molecular chaperone, activating the urease apoprotein by helping to assemble the nickel containing metallocenter of UreC. The UreE protein probably delivers the nickel.

Its subcellular location is the cytoplasm. Its function is as follows. Required for maturation of urease via the functional incorporation of the urease nickel metallocenter. This Cupriavidus metallidurans (strain ATCC 43123 / DSM 2839 / NBRC 102507 / CH34) (Ralstonia metallidurans) protein is Urease accessory protein UreD.